The primary structure comprises 648 residues: ATP-dependent zinc metalloprotease FtsH 4 (648 aa).

Topologically, residues methionine 1 to lysine 6 are cytoplasmic. The chain crosses the membrane as a helical span at residues threonine 7 to proline 27. Residues aspartate 28–proline 111 lie on the Periplasmic side of the membrane. The helical transmembrane segment at phenylalanine 112–leucine 132 threads the bilayer. Over phenylalanine 133–threonine 648 the chain is Cytoplasmic. ATP is bound at residue glycine 205 to threonine 212. Residue histidine 427 participates in Zn(2+) binding. Residue glutamate 428 is part of the active site. Zn(2+) is bound by residues histidine 431 and aspartate 504. The interval tyrosine 622–threonine 648 is disordered.

This sequence in the central section; belongs to the AAA ATPase family. In the C-terminal section; belongs to the peptidase M41 family. In terms of assembly, homohexamer. The cofactor is Zn(2+).

It localises to the cell inner membrane. Acts as a processive, ATP-dependent zinc metallopeptidase for both cytoplasmic and membrane proteins. Plays a role in the quality control of integral membrane proteins. The chain is ATP-dependent zinc metalloprotease FtsH 4 from Sorangium cellulosum (strain So ce56) (Polyangium cellulosum (strain So ce56)).